Reading from the N-terminus, the 138-residue chain is ATP synthase epsilon chain (138 aa).

It belongs to the ATPase epsilon chain family. In terms of assembly, F-type ATPases have 2 components, CF(1) - the catalytic core - and CF(0) - the membrane proton channel. CF(1) has five subunits: alpha(3), beta(3), gamma(1), delta(1), epsilon(1). CF(0) has three main subunits: a, b and c.

The protein resides in the cell inner membrane. In terms of biological role, produces ATP from ADP in the presence of a proton gradient across the membrane. In Acidovorax ebreus (strain TPSY) (Diaphorobacter sp. (strain TPSY)), this protein is ATP synthase epsilon chain.